The sequence spans 295 residues: Large ribosomal subunit protein uL15m (295 aa).

The transit peptide at 1–20 (MAGTARGCGTSLDLLRSLPR) directs the protein to the mitochondrion. A disordered region spans residues 21–67 (VSLANLKPSPNSRKRERRPRDRRRGRKCGRGHKGERQRGTRPRLGFE). Residues 32–51 (SRKRERRPRDRRRGRKCGRG) are compositionally biased toward basic residues.

Belongs to the universal ribosomal protein uL15 family. In terms of assembly, component of the mitochondrial ribosome large subunit (39S) which comprises a 16S rRNA and about 50 distinct proteins.

The protein localises to the mitochondrion. This is Large ribosomal subunit protein uL15m (Mrpl15) from Mus musculus (Mouse).